The following is a 2286-amino-acid chain: DNA polymerase epsilon catalytic subunit A (2286 aa).

A disordered region spans residues 1–30 (MSLRSGGRRRADPGADGEASRDDGATSSVS). Residues 9-24 (RRADPGADGEASRDDG) show a composition bias toward basic and acidic residues. A phosphoserine mark is found at Ser-1184, Ser-1297, Ser-1317, and Ser-1940. The tract at residues 1939-1969 (DSQKAGGAEDEQENEDDEEERDGEEEEEAEE) is disordered. Residues 1946-1969 (AEDEQENEDDEEERDGEEEEEAEE) show a composition bias toward acidic residues. Cys-2158, Cys-2161, Cys-2187, and Cys-2190 together coordinate Zn(2+). Residues 2158–2190 (CRSCNFCRDLDLCKDSSFSEDGAVLPQWLCSNC) form a CysA-type zinc finger. Positions 2221, 2224, 2236, and 2238 each coordinate [4Fe-4S] cluster. The CysB motif signature appears at 2221–2238 (CLKCRGVKETSMPVYCSC).

It belongs to the DNA polymerase type-B family. As to quaternary structure, component of the DNA polymerase epsilon complex consisting of four subunits: the catalytic subunit POLE and the accessory subunits POLE2, POLE3 and POLE4. Interacts with RAD17 and TOPBP1.

It is found in the nucleus. The enzyme catalyses DNA(n) + a 2'-deoxyribonucleoside 5'-triphosphate = DNA(n+1) + diphosphate. Catalytic component of the DNA polymerase epsilon complex. Participates in chromosomal DNA replication. Required during synthesis of the leading DNA strands at the replication fork, binds at/or near replication origins and moves along DNA with the replication fork. Has 3'-5' proofreading exonuclease activity that corrects errors arising during DNA replication. Involved in DNA synthesis during DNA repair. Along with DNA polymerase POLD1 and DNA polymerase POLK, has a role in excision repair (NER) synthesis following UV irradiation. This Homo sapiens (Human) protein is DNA polymerase epsilon catalytic subunit A.